We begin with the raw amino-acid sequence, 229 residues long: Large ribosomal subunit protein uL1 (229 aa).

This sequence belongs to the universal ribosomal protein uL1 family. As to quaternary structure, part of the 50S ribosomal subunit.

Its function is as follows. Binds directly to 23S rRNA. The L1 stalk is quite mobile in the ribosome, and is involved in E site tRNA release. Protein L1 is also a translational repressor protein, it controls the translation of the L11 operon by binding to its mRNA. The protein is Large ribosomal subunit protein uL1 of Phenylobacterium zucineum (strain HLK1).